The sequence spans 195 residues: Nucleoside triphosphate pyrophosphatase (195 aa).

Residue D76 is the Proton acceptor of the active site.

Belongs to the Maf family. Requires a divalent metal cation as cofactor.

The protein resides in the cytoplasm. It carries out the reaction a ribonucleoside 5'-triphosphate + H2O = a ribonucleoside 5'-phosphate + diphosphate + H(+). It catalyses the reaction a 2'-deoxyribonucleoside 5'-triphosphate + H2O = a 2'-deoxyribonucleoside 5'-phosphate + diphosphate + H(+). Its function is as follows. Nucleoside triphosphate pyrophosphatase. May have a dual role in cell division arrest and in preventing the incorporation of modified nucleotides into cellular nucleic acids. This Pelagibacter ubique (strain HTCC1062) protein is Nucleoside triphosphate pyrophosphatase.